Reading from the N-terminus, the 1896-residue chain is Trinucleotide repeat-containing gene 6A protein (1896 aa).

Composition is skewed to basic and acidic residues over residues 1–21 (MREL…RDLV) and 39–57 (KKKE…KVPE). Disordered stretches follow at residues 1-137 (MREL…LLKR), 159-209 (SESS…DCST), 222-250 (EAWP…SESE), and 257-276 (ASGN…GLGS). Residues 1–917 (MRELEAKATK…GDPPKCNQSL (917 aa)) form an interaction with argonaute family proteins region. 2 stretches are compositionally biased toward low complexity: residues 69–93 (ANSD…ASNQ) and 101–113 (QQPQ…QQPQ). The span at 125 to 137 (RFRHQEHKQLLKR) shows a compositional bias: basic residues. The sufficient for interaction with AGO1, AGO3 and AGO4 stretch occupies residues 239–488 (IDADSASNSE…QAPSVMNGTS (250 aa)). Sufficient for interaction with AGO2 stretches follow at residues 255-331 (VMAS…NAWG), 303-384 (GALI…STIG), 325-424 (NRMN…KVSF), 394-480 (SKVS…QIQA), and 487-736 (TSLS…NGTE). Composition is skewed to polar residues over residues 396 to 410 (VSGS…SLQE) and 417 to 429 (SGTQ…GQPQ). Disordered stretches follow at residues 396–461 (VSGS…NELP), 548–683 (FQVN…RRKI), 703–998 (LSNS…DPSK), 1011–1126 (IPEA…PTGW), and 1143–1182 (QELN…NKQE). Residues 430–443 (NITTETTGPNNTTN) show a composition bias toward low complexity. Polar residues predominate over residues 444-461 (FMTSSLPNSGSVQNNELP). Residues 551-1279 (NTNKGGGVWE…MFGVGNTAAQ (729 aa)) are sufficient for interaction with AGO1 and AGO4. Positions 573 to 584 (SGNGANSGGSRR) are enriched in gly residues. Polar residues-rich tracts occupy residues 591–617 (QNTG…SANG) and 635–647 (GSAT…QNSV). A compositionally biased stretch (basic and acidic residues) spans 665-683 (GRLEEKVTGESQSRDRRKI). A compositionally biased stretch (polar residues) spans 703–722 (LSNSGWGQTPIKQNTAWDTE). A compositionally biased stretch (basic and acidic residues) spans 723-733 (TSPRGERKTDN). A Phosphoserine modification is found at Ser-724. Residues 738–766 (WGSSATQTFNSGACTDKTSPNSNDTSSVS) show a composition bias toward polar residues. A compositionally biased stretch (low complexity) spans 858–871 (SSSGGSDSDRSISG). Ser-863 is modified (phosphoserine). Polar residues-rich tracts occupy residues 876 to 906 (GKTS…SSQG) and 924 to 937 (KPVS…QQDI). Ser-976 carries the post-translational modification Phosphoserine. Polar residues-rich tracts occupy residues 1033–1042 (AVSSKETSSG), 1054–1064 (TPATTVDNGTS), and 1082–1105 (AASN…SGPK). A sufficient for interaction with AGO2 region spans residues 1059-1129 (VDNGTSAWGK…GSRPTGWEEE (71 aa)). A compositionally biased stretch (low complexity) spans 1143-1163 (QELNSSLNWPPYTKKMSSKGL). A phosphoserine mark is found at Ser-1197 and Ser-1255. Disordered regions lie at residues 1234–1256 (GDYN…ESSM), 1273–1306 (VGNT…PPPL), and 1360–1395 (QRAQ…QSRQ). 2 stretches are compositionally biased toward low complexity: residues 1284-1296 (QQPP…SSQP) and 1360-1376 (QRAQ…RQQQ). The residue at position 1406 (Thr-1406) is a Phosphothreonine. 2 disordered regions span residues 1512–1570 (MNSS…VTPG) and 1659–1685 (PKNI…WDNS). Ser-1520 bears the Phosphoserine mark. The sufficient for interaction with AGO2 stretch occupies residues 1605–1896 (TSAWSSIRAS…DHLGGGGESM (292 aa)). One can recognise an RRM domain in the interval 1716-1788 (NWLVLKNLTP…TTILAEFASE (73 aa)). Ser-1804 and Ser-1825 each carry phosphoserine.

It belongs to the GW182 family. In terms of assembly, interacts with AGO2. Interacts with AGO1, AGO3 and AGO4. Interacts with CNOT1; the interaction is direct and mediates the association with the CCR4-NOT complex. Interacts with ZC3H12A. Interacts with SND1. Interacts with GARRE1.

It localises to the cytoplasm. It is found in the P-body. Plays a role in RNA-mediated gene silencing by both micro-RNAs (miRNAs) and short interfering RNAs (siRNAs). Required for miRNA-dependent repression of translation and for siRNA-dependent endonucleolytic cleavage of complementary mRNAs by argonaute family proteins. As a scaffolding protein, associates with argonaute proteins bound to partially complementary mRNAs, and can simultaneously recruit CCR4-NOT and PAN deadenylase complexes. This Mus musculus (Mouse) protein is Trinucleotide repeat-containing gene 6A protein (Tnrc6a).